The sequence spans 97 residues: Co-chaperonin GroES (97 aa).

The protein belongs to the GroES chaperonin family. Heptamer of 7 subunits arranged in a ring. Interacts with the chaperonin GroEL.

It localises to the cytoplasm. In terms of biological role, together with the chaperonin GroEL, plays an essential role in assisting protein folding. The GroEL-GroES system forms a nano-cage that allows encapsulation of the non-native substrate proteins and provides a physical environment optimized to promote and accelerate protein folding. GroES binds to the apical surface of the GroEL ring, thereby capping the opening of the GroEL channel. The polypeptide is Co-chaperonin GroES (Nocardioides sp. (strain ATCC BAA-499 / JS614)).